The sequence spans 331 residues: ADP-L-glycero-D-manno-heptose-6-epimerase (331 aa).

NADP(+)-binding positions include 11–12, 32–33, lysine 39, lysine 54, 75–79, and asparagine 92; these read FI, DN, and EGACS. Residue tyrosine 139 is the Proton acceptor of the active site. Residue lysine 143 coordinates NADP(+). Residue asparagine 168 coordinates substrate. NADP(+) is bound by residues valine 169 and lysine 177. The active-site Proton acceptor is lysine 177. Residues arginine 179, histidine 186, 200–203, arginine 213, and tyrosine 292 each bind substrate; that span reads FGEY.

Belongs to the NAD(P)-dependent epimerase/dehydratase family. HldD subfamily. Homopentamer. It depends on NADP(+) as a cofactor.

The enzyme catalyses ADP-D-glycero-beta-D-manno-heptose = ADP-L-glycero-beta-D-manno-heptose. The protein operates within nucleotide-sugar biosynthesis; ADP-L-glycero-beta-D-manno-heptose biosynthesis; ADP-L-glycero-beta-D-manno-heptose from D-glycero-beta-D-manno-heptose 7-phosphate: step 4/4. Catalyzes the interconversion between ADP-D-glycero-beta-D-manno-heptose and ADP-L-glycero-beta-D-manno-heptose via an epimerization at carbon 6 of the heptose. This is ADP-L-glycero-D-manno-heptose-6-epimerase from Ralstonia pickettii (strain 12J).